The following is a 634-amino-acid chain: Chaperone protein dnaK2 (634 aa).

T197 is subject to Phosphothreonine; by autocatalysis. Low complexity predominate over residues 601–620; that stretch reads SAEASANAQAGPSSSSSSSS. Residues 601–634 are disordered; it reads SAEASANAQAGPSSSSSSSSGDDDVIDAEFSESK. The segment covering 621-634 has biased composition (acidic residues); sequence GDDDVIDAEFSESK.

This sequence belongs to the heat shock protein 70 family.

Acts as a chaperone. This Synechococcus elongatus (strain ATCC 33912 / PCC 7942 / FACHB-805) (Anacystis nidulans R2) protein is Chaperone protein dnaK2 (dnaK2).